The chain runs to 402 residues: Putative cytochrome P450 123 (402 aa).

Cys350 is a binding site for heme.

It belongs to the cytochrome P450 family. It depends on heme as a cofactor.

This Mycobacterium bovis (strain ATCC BAA-935 / AF2122/97) protein is Putative cytochrome P450 123 (cyp123).